The chain runs to 396 residues: Tyrosine--tRNA ligase (396 aa).

Tyr36 contacts L-tyrosine. Residues 41–50 carry the 'HIGH' region motif; sequence PTANSLHIGN. Positions 165 and 169 each coordinate L-tyrosine. The 'KMSKS' region signature appears at 225-229; sequence KMGKT. An ATP-binding site is contributed by Lys228. An S4 RNA-binding domain is found at 331–394; sequence TNLIDYLVET…KKSFLTIKTV (64 aa).

This sequence belongs to the class-I aminoacyl-tRNA synthetase family. TyrS type 1 subfamily. As to quaternary structure, homodimer.

It localises to the cytoplasm. The catalysed reaction is tRNA(Tyr) + L-tyrosine + ATP = L-tyrosyl-tRNA(Tyr) + AMP + diphosphate + H(+). Its function is as follows. Catalyzes the attachment of tyrosine to tRNA(Tyr) in a two-step reaction: tyrosine is first activated by ATP to form Tyr-AMP and then transferred to the acceptor end of tRNA(Tyr). This chain is Tyrosine--tRNA ligase, found in Mycoplasma genitalium (strain ATCC 33530 / DSM 19775 / NCTC 10195 / G37) (Mycoplasmoides genitalium).